The sequence spans 910 residues: Schlafen family member 8 (910 aa).

The interval 1–354 is n'-domain region; sequence METHPSLAVK…WVRMMVDFGP (354 aa). Active-site residues include Glu205 and Glu210. Zn(2+) is bound by residues His280, Cys282, and Cys319. An ATP-binding site is contributed by 599-606; the sequence is GLPGSGKT.

This sequence belongs to the Schlafen family. Subgroup III subfamily. It depends on Mg(2+) as a cofactor. In terms of tissue distribution, in T-cells, expressed at relatively constant levels during development: expressed in immature CD3(-)CD4(-)CD8(-) T-cells (DN stage), in CD4(+)CD8(+) double-positive stage (DP) and mature CD4(+) or CD8(+) thymocytes. Expression is slightly reduced at the DP stage.

It localises to the cytoplasm. Endoribonuclease that cleaves tRNAs and rRNAs. Cleaves tRNAs 11 nucleotides from the 3'-terminus at the acceptor stem. May be involved in immune system via regulation of inflammation. This Mus musculus (Mouse) protein is Schlafen family member 8.